The following is a 145-amino-acid chain: Basic phospholipase A2 S11-61 (145 aa).

The signal sequence occupies residues Met1 to Ala19. The propeptide occupies Ser20–Leu27. Intrachain disulfides connect Cys38–Cys98, Cys54–Cys144, Cys56–Cys72, Cys71–Cys125, Cys78–Cys118, Cys87–Cys111, and Cys105–Cys116. Tyr55, Gly57, and Gly59 together coordinate Ca(2+). The active site involves His75. Ca(2+) is bound at residue Asp76. The active site involves Asp119.

It belongs to the phospholipase A2 family. Group I subfamily. D49 sub-subfamily. Ca(2+) serves as cofactor. Expressed by the venom gland.

Its subcellular location is the secreted. The enzyme catalyses a 1,2-diacyl-sn-glycero-3-phosphocholine + H2O = a 1-acyl-sn-glycero-3-phosphocholine + a fatty acid + H(+). Snake venom phospholipase A2 (PLA2) that inhibits collagen-induced platelet aggregation. PLA2 catalyzes the calcium-dependent hydrolysis of the 2-acyl groups in 3-sn-phosphoglycerides. The chain is Basic phospholipase A2 S11-61 from Austrelaps superbus (Lowland copperhead snake).